The primary structure comprises 119 residues: Small ribosomal subunit protein uS13m (119 aa).

The protein belongs to the universal ribosomal protein uS13 family. Part of the small ribosomal subunit.

The protein localises to the mitochondrion. Functionally, located at the top of the head of the small subunit, it contacts several helices of the small subunit rRNA. The protein is Small ribosomal subunit protein uS13m (RPS13) of Acanthamoeba castellanii (Amoeba).